We begin with the raw amino-acid sequence, 115 residues long: Non-specific lipid-transfer protein (115 aa).

The first 24 residues, 1-24, serve as a signal peptide directing secretion; sequence MASSAVIKLALVVALCMAVSVAHA. Cystine bridges form between Cys27/Cys74, Cys37/Cys51, Cys52/Cys97, and Cys72/Cys111.

This sequence belongs to the plant LTP family.

In terms of biological role, plant non-specific lipid-transfer proteins transfer phospholipids as well as galactolipids across membranes. May play a role in wax or cutin deposition in the cell walls of expanding epidermal cells and certain secretory tissues. This is Non-specific lipid-transfer protein from Pyrus communis (Pear).